An 880-amino-acid chain; its full sequence is Translation initiation factor IF-2 (880 aa).

Basic and acidic residues-rich tracts occupy residues 180–194 (QEAA…EAAK) and 202–228 (LAEE…DHHI). Residues 180 to 289 (QEAATKRKQD…APESMAHGFN (110 aa)) form a disordered region. A compositionally biased stretch (basic residues) spans 249–262 (GRRARNKSNAKKRG). Positions 380 to 549 (SRAPVVTIMG…LLQAEVLELK (170 aa)) constitute a tr-type G domain. The G1 stretch occupies residues 389 to 396 (GHVDHGKT). GTP is bound at residue 389-396 (GHVDHGKT). The interval 414–418 (GITQH) is G2. A G3 region spans residues 435-438 (DTPG). GTP-binding positions include 435-439 (DTPGH) and 489-492 (NKMD). Residues 489 to 492 (NKMD) are G4. A G5 region spans residues 525–527 (SAK).

The protein belongs to the TRAFAC class translation factor GTPase superfamily. Classic translation factor GTPase family. IF-2 subfamily.

Its subcellular location is the cytoplasm. Functionally, one of the essential components for the initiation of protein synthesis. Protects formylmethionyl-tRNA from spontaneous hydrolysis and promotes its binding to the 30S ribosomal subunits. Also involved in the hydrolysis of GTP during the formation of the 70S ribosomal complex. This chain is Translation initiation factor IF-2, found in Shewanella baltica (strain OS223).